The following is a 96-amino-acid chain: Small ribosomal subunit protein bS6 (96 aa).

This sequence belongs to the bacterial ribosomal protein bS6 family.

Functionally, binds together with bS18 to 16S ribosomal RNA. This Streptococcus gordonii (strain Challis / ATCC 35105 / BCRC 15272 / CH1 / DL1 / V288) protein is Small ribosomal subunit protein bS6.